A 171-amino-acid chain; its full sequence is uncharacterized protein (171 aa).

This is an uncharacterized protein from Rhizobium etli.